Here is a 503-residue protein sequence, read N- to C-terminus: UDP-N-acetylmuramoyl-L-alanyl-D-glutamate--2,6-diaminopimelate ligase (503 aa).

Position 32 (serine 32) interacts with UDP-N-acetyl-alpha-D-muramoyl-L-alanyl-D-glutamate. Position 117 to 123 (117 to 123 (GTNGKTT)) interacts with ATP. UDP-N-acetyl-alpha-D-muramoyl-L-alanyl-D-glutamate contacts are provided by residues 159–160 (TT), serine 186, glutamine 192, and arginine 194. An N6-carboxylysine modification is found at lysine 226. Meso-2,6-diaminopimelate contacts are provided by residues arginine 396, 420-423 (DNPR), glycine 471, and glutamate 475. The short motif at 420–423 (DNPR) is the Meso-diaminopimelate recognition motif element.

This sequence belongs to the MurCDEF family. MurE subfamily. Mg(2+) is required as a cofactor. In terms of processing, carboxylation is probably crucial for Mg(2+) binding and, consequently, for the gamma-phosphate positioning of ATP.

Its subcellular location is the cytoplasm. The catalysed reaction is UDP-N-acetyl-alpha-D-muramoyl-L-alanyl-D-glutamate + meso-2,6-diaminopimelate + ATP = UDP-N-acetyl-alpha-D-muramoyl-L-alanyl-gamma-D-glutamyl-meso-2,6-diaminopimelate + ADP + phosphate + H(+). It participates in cell wall biogenesis; peptidoglycan biosynthesis. Functionally, catalyzes the addition of meso-diaminopimelic acid to the nucleotide precursor UDP-N-acetylmuramoyl-L-alanyl-D-glutamate (UMAG) in the biosynthesis of bacterial cell-wall peptidoglycan. The protein is UDP-N-acetylmuramoyl-L-alanyl-D-glutamate--2,6-diaminopimelate ligase of Prochlorococcus marinus (strain SARG / CCMP1375 / SS120).